The following is a 291-amino-acid chain: Homeobox protein SIX2 (291 aa).

The homeobox DNA-binding region spans 124–183 (GEETSYCFKEKSRSVLREWYAHNPYPSPREKRELAEATGLTTTQVSNWFKNRRQRDRAAE). Positions 168-279 (VSNWFKNRRQ…HHHGLQDSIL (112 aa)) are disordered. The segment covering 179-190 (DRAAEAKERENN) has biased composition (basic and acidic residues). Low complexity predominate over residues 224-233 (HSSSSPALLL). Residues 249-259 (PPGPSAVPVPV) are compositionally biased toward pro residues.

This sequence belongs to the SIX/Sine oculis homeobox family. Interacts with TCF7L2; in a canonical Wnt signaling independent manner; prevents transcription of differentiation genes in cap mesenchyme. Interacts with OSR1; form a strong repressor complex with TCF7L2, TLE2 and TLE3 to prevent the activation of Wnt/beta-catenin target genes in the cap mesenchyme. Interacts with HOXA11, EYA1 and EYA3. In terms of tissue distribution, strongly expressed in skeletal muscle. Expressed in Wilms' tumor and in the cap mesenchyme of fetal kidney (at protein level).

It is found in the nucleus. In terms of biological role, transcription factor that plays an important role in the development of several organs, including kidney, skull and stomach. During kidney development, maintains cap mesenchyme multipotent nephron progenitor cells in an undifferentiated state by opposing the inductive signals emanating from the ureteric bud and cooperates with WNT9B to promote renewing progenitor cells proliferation. Acts through its interaction with TCF7L2 and OSR1 in a canonical Wnt signaling independent manner preventing transcription of differentiation genes in cap mesenchyme such as WNT4. Also acts independently of OSR1 to activate expression of many cap mesenchyme genes, including itself, GDNF and OSR1. During craniofacial development plays a role in growth and elongation of the cranial base through regulation of chondrocyte differentiation. During stomach organogenesis, controls pyloric sphincter formation and mucosal growth through regulation of a gene network including NKX2-5, BMPR1B, BMP4, SOX9 and GREM1. During branchial arch development, acts to mediate HOXA2 control over the insulin-like growth factor pathway. May also be involved in limb tendon and ligament development. Plays a role in cell proliferation and migration. The sequence is that of Homeobox protein SIX2 (SIX2) from Homo sapiens (Human).